The sequence spans 207 residues: Imidazole glycerol phosphate synthase subunit HisH (207 aa).

The Glutamine amidotransferase type-1 domain maps to 1 to 207 (MIGIIDYGMG…KRFGQLVEGN (207 aa)). The active-site Nucleophile is the cysteine 79. Active-site residues include histidine 185 and glutamate 187.

Heterodimer of HisH and HisF.

Its subcellular location is the cytoplasm. The catalysed reaction is 5-[(5-phospho-1-deoxy-D-ribulos-1-ylimino)methylamino]-1-(5-phospho-beta-D-ribosyl)imidazole-4-carboxamide + L-glutamine = D-erythro-1-(imidazol-4-yl)glycerol 3-phosphate + 5-amino-1-(5-phospho-beta-D-ribosyl)imidazole-4-carboxamide + L-glutamate + H(+). It carries out the reaction L-glutamine + H2O = L-glutamate + NH4(+). It functions in the pathway amino-acid biosynthesis; L-histidine biosynthesis; L-histidine from 5-phospho-alpha-D-ribose 1-diphosphate: step 5/9. Functionally, IGPS catalyzes the conversion of PRFAR and glutamine to IGP, AICAR and glutamate. The HisH subunit catalyzes the hydrolysis of glutamine to glutamate and ammonia as part of the synthesis of IGP and AICAR. The resulting ammonia molecule is channeled to the active site of HisF. This is Imidazole glycerol phosphate synthase subunit HisH from Shouchella clausii (strain KSM-K16) (Alkalihalobacillus clausii).